A 317-amino-acid polypeptide reads, in one-letter code: Tyrosine--tRNA ligase (317 aa).

Tyr32 contacts L-tyrosine. The short motif at 37-45 (PSGEIHLGH) is the 'HIGH' region element. L-tyrosine contacts are provided by Tyr152, Gln156, Asp159, and Gln174. The 'KMSKS' region motif lies at 208 to 212 (KMSSS). Ser211 is an ATP binding site.

Belongs to the class-I aminoacyl-tRNA synthetase family. TyrS type 3 subfamily. As to quaternary structure, homodimer.

It is found in the cytoplasm. It catalyses the reaction tRNA(Tyr) + L-tyrosine + ATP = L-tyrosyl-tRNA(Tyr) + AMP + diphosphate + H(+). In terms of biological role, catalyzes the attachment of tyrosine to tRNA(Tyr) in a two-step reaction: tyrosine is first activated by ATP to form Tyr-AMP and then transferred to the acceptor end of tRNA(Tyr). This Methanocorpusculum labreanum (strain ATCC 43576 / DSM 4855 / Z) protein is Tyrosine--tRNA ligase.